Reading from the N-terminus, the 680-residue chain is MSQNHILPQNSITNAVLEWNESGTPVSNDFDDVYFSNDNGLEETRYVFLQQNHLPQRWQEYDQRRFVIGETGFGTGLNFLAVWQWFKEFRSQYPDAPLKELHFVSFEKFPVTKSDLIKAHQAWPELAQFAEQLQEHYPAAVPDCHRLVLEDGMITLDLWFGDIKDCMPQIWMDDKGLIDAWFLDGFAPSKNPEMWNQTLFNNMASLAKKGCTCATFTAAGFVRRGLIEAGFDMKKVKGFGHKREMIAGTLTERTTKANHEVWYARSTKENITDVAIIGGGVASAALATTLIRRGVKVSVYCKDEKSAQGASGNKQGAVYPLLNEKFNSLSRFFAPGFIFARQFIDQAAKHVEFDHDWCGVTQLKWDEKSANKLNKMLEGNFPNELVSSFDIDKTNQMVGLPINMESVHYSLGGWLCPKQLTRGLFEHLSNNPLFTLHCDSEIIALTQNEEQQWLLSTDSNAYQHQAVVVANGHRFTDFEQTKDIPATPVRGQVSHIPTTESLKNLKTVLCYDGYLTPENSKHQTHCIGASYDRRDLDLAFKESDQIENGERLRKCVPNEVWPNDVDTSDNQARVGIRCASRDHLPFIGNVVRFEEMQEEYKNIYKKRHWLREAKDIPVYEGLFCMLTLGSRGLSSAPLLAEALASQIMGDPIPLPNSVLEGLHPGRLWVRRLLKGKPLDI.

The tract at residues methionine 1–threonine 251 is tRNA (mnm(5)s(2)U34)-methyltransferase. The segment at isoleucine 277–isoleucine 680 is FAD-dependent cmnm(5)s(2)U34 oxidoreductase.

In the N-terminal section; belongs to the methyltransferase superfamily. tRNA (mnm(5)s(2)U34)-methyltransferase family. The protein in the C-terminal section; belongs to the DAO family. The cofactor is FAD.

The protein resides in the cytoplasm. It carries out the reaction 5-aminomethyl-2-thiouridine(34) in tRNA + S-adenosyl-L-methionine = 5-methylaminomethyl-2-thiouridine(34) in tRNA + S-adenosyl-L-homocysteine + H(+). Catalyzes the last two steps in the biosynthesis of 5-methylaminomethyl-2-thiouridine (mnm(5)s(2)U) at the wobble position (U34) in tRNA. Catalyzes the FAD-dependent demodification of cmnm(5)s(2)U34 to nm(5)s(2)U34, followed by the transfer of a methyl group from S-adenosyl-L-methionine to nm(5)s(2)U34, to form mnm(5)s(2)U34. This Aliivibrio fischeri (strain ATCC 700601 / ES114) (Vibrio fischeri) protein is tRNA 5-methylaminomethyl-2-thiouridine biosynthesis bifunctional protein MnmC.